The primary structure comprises 327 residues: Neurogenic differentiation factor 6-A (327 aa).

Positions 17–85 (GANFPRDCVG…KKMTKARVDR (69 aa)) are disordered. Over residues 24-46 (CVGDLKGNKQEPFEKEETLSHVM) the composition is skewed to basic and acidic residues. A compositionally biased stretch (acidic residues) spans 47 to 63 (DDDDSEKDEDEREDGQD). Basic residues predominate over residues 68–80 (PRRRGPRKKKMTK). The Nuclear localization signal motif lies at 74 to 80 (RKKKMTK). A bHLH domain is found at 88 to 140 (VRRMEANARERNRMHGLNNALDSLRKVVPCYSKTQKLSKIETLRLAKNYIWAL).

Efficient DNA binding requires dimerization with another bHLH protein. As to expression, embryonic olfactory bulbs. In adult, expressed in brain, eye, intestine, muscle, ovary and skin.

It localises to the nucleus. Differentiation factor required for neurogenesis. Acts as an upstream activator of isl1. This Danio rerio (Zebrafish) protein is Neurogenic differentiation factor 6-A.